The chain runs to 1236 residues: Chitinase-like protein PB1E7.04c (1236 aa).

The N-terminal stretch at 1 to 19 (MRLISSLLLLVYSARLALS) is a signal peptide. N-linked (GlcNAc...) asparagine glycosylation is found at asparagine 21, asparagine 24, asparagine 54, asparagine 123, asparagine 225, asparagine 237, asparagine 255, asparagine 267, asparagine 277, asparagine 288, and asparagine 309. A GH18 domain is found at 26 to 325 (TAVLGYWGSN…EAIHKILDTK (300 aa)). Disordered stretches follow at residues 326 to 367 (SKHS…TSSA), 449 to 497 (VSSI…QSTL), and 584 to 625 (TSSP…STIL). Residues 339-351 (QGLESTSSIALNP) show a composition bias toward polar residues. Residues 352–367 (TSSISSTSSSSSTSSA) are compositionally biased toward low complexity. Residues asparagine 715, asparagine 737, asparagine 768, asparagine 786, and asparagine 813 are each glycosylated (N-linked (GlcNAc...) asparagine). Disordered stretches follow at residues 804-836 (ISTS…LAAN), 868-927 (TTAL…TSSS), 946-979 (TPTS…SSIA), and 1125-1159 (AASG…TPSN). Residues 810–821 (NEYNTSFHAPTV) are compositionally biased toward polar residues. Positions 822 to 832 (SSTTSSSSTTS) are enriched in low complexity. The span at 1125–1156 (AASGSSTVTSSATASSSSSAATTADSSVTTDT) shows a compositional bias: low complexity.

It belongs to the glycosyl hydrolase 18 family. Chitinase class III subfamily.

The protein resides in the secreted. This is Chitinase-like protein PB1E7.04c from Schizosaccharomyces pombe (strain 972 / ATCC 24843) (Fission yeast).